Reading from the N-terminus, the 430-residue chain is Glucose-6-phosphate isomerase (430 aa).

E284 (proton donor) is an active-site residue. Catalysis depends on residues H305 and K420.

The protein belongs to the GPI family.

Its subcellular location is the cytoplasm. The enzyme catalyses alpha-D-glucose 6-phosphate = beta-D-fructose 6-phosphate. Its pathway is carbohydrate biosynthesis; gluconeogenesis. It functions in the pathway carbohydrate degradation; glycolysis; D-glyceraldehyde 3-phosphate and glycerone phosphate from D-glucose: step 2/4. In terms of biological role, catalyzes the reversible isomerization of glucose-6-phosphate to fructose-6-phosphate. This is Glucose-6-phosphate isomerase from Mycoplasmopsis synoviae (strain 53) (Mycoplasma synoviae).